The primary structure comprises 434 residues: UDP-N-acetylglucosamine 1-carboxyvinyltransferase (434 aa).

A phosphoenolpyruvate-binding site is contributed by 22–23 (KN). Position 97 (R97) interacts with UDP-N-acetyl-alpha-D-glucosamine. D121 functions as the Proton donor in the catalytic mechanism. 2 residues coordinate UDP-N-acetyl-alpha-D-glucosamine: D319 and M341.

This sequence belongs to the EPSP synthase family. MurA subfamily.

It localises to the cytoplasm. The catalysed reaction is phosphoenolpyruvate + UDP-N-acetyl-alpha-D-glucosamine = UDP-N-acetyl-3-O-(1-carboxyvinyl)-alpha-D-glucosamine + phosphate. The protein operates within cell wall biogenesis; peptidoglycan biosynthesis. Its function is as follows. Cell wall formation. Adds enolpyruvyl to UDP-N-acetylglucosamine. The polypeptide is UDP-N-acetylglucosamine 1-carboxyvinyltransferase (Bacteroides thetaiotaomicron (strain ATCC 29148 / DSM 2079 / JCM 5827 / CCUG 10774 / NCTC 10582 / VPI-5482 / E50)).